The sequence spans 491 residues: Nicotinamide phosphoribosyltransferase (491 aa).

Met1 is subject to N-acetylmethionine. Phosphotyrosine is present on Tyr188. Arg196 contributes to the diphosphate binding site. Asp219 serves as a coordination point for beta-nicotinamide D-ribonucleotide. Residues His247 and Arg311 each coordinate diphosphate. Residues 311–313 (RPD), 353–354 (GD), Gly384, and Arg392 contribute to the beta-nicotinamide D-ribonucleotide site. A Phosphoserine modification is found at Ser472.

The protein belongs to the NAPRTase family. As to quaternary structure, homodimer.

The protein localises to the nucleus. It localises to the cytoplasm. The protein resides in the secreted. It catalyses the reaction beta-nicotinamide D-ribonucleotide + diphosphate = 5-phospho-alpha-D-ribose 1-diphosphate + nicotinamide + H(+). The protein operates within cofactor biosynthesis; NAD(+) biosynthesis; nicotinamide D-ribonucleotide from 5-phospho-alpha-D-ribose 1-diphosphate and nicotinamide: step 1/1. Functionally, catalyzes the condensation of nicotinamide with 5-phosphoribosyl-1-pyrophosphate to yield nicotinamide mononucleotide, an intermediate in the biosynthesis of NAD. It is the rate limiting component in the mammalian NAD biosynthesis pathway. The secreted form behaves both as a cytokine with immunomodulating properties and an adipokine with anti-diabetic properties, it has no enzymatic activity, partly because of lack of activation by ATP, which has a low level in extracellular space and plasma. Plays a role in the modulation of circadian clock function. Plays a role in the modulation of circadian clock function. NAMPT-dependent oscillatory production of NAD regulates oscillation of clock target gene expression by releasing the core clock component: CLOCK-BMAL1 heterodimer from NAD-dependent SIRT1-mediated suppression. This chain is Nicotinamide phosphoribosyltransferase (NAMPT), found in Sus scrofa (Pig).